A 159-amino-acid polypeptide reads, in one-letter code: ATP synthase subunit b' (159 aa).

A helical transmembrane segment spans residues 27–47 (ATLPLMAVQFLILTVILNALL).

The protein belongs to the ATPase B chain family. F-type ATPases have 2 components, F(1) - the catalytic core - and F(0) - the membrane proton channel. F(1) has five subunits: alpha(3), beta(3), gamma(1), delta(1), epsilon(1). F(0) has four main subunits: a(1), b(1), b'(1) and c(10-14). The alpha and beta chains form an alternating ring which encloses part of the gamma chain. F(1) is attached to F(0) by a central stalk formed by the gamma and epsilon chains, while a peripheral stalk is formed by the delta, b and b' chains.

Its subcellular location is the cellular thylakoid membrane. In terms of biological role, f(1)F(0) ATP synthase produces ATP from ADP in the presence of a proton or sodium gradient. F-type ATPases consist of two structural domains, F(1) containing the extramembraneous catalytic core and F(0) containing the membrane proton channel, linked together by a central stalk and a peripheral stalk. During catalysis, ATP synthesis in the catalytic domain of F(1) is coupled via a rotary mechanism of the central stalk subunits to proton translocation. Component of the F(0) channel, it forms part of the peripheral stalk, linking F(1) to F(0). The b'-subunit is a diverged and duplicated form of b found in plants and photosynthetic bacteria. This chain is ATP synthase subunit b', found in Synechococcus sp. (strain PCC 6716).